We begin with the raw amino-acid sequence, 445 residues long: Aminopeptidase C (445 aa).

Residues Cys69, His363, and Asn385 contribute to the active site.

It belongs to the peptidase C1 family. Homohexamer.

It carries out the reaction Inactivates bleomycin B2 (a cytotoxic glycometallopeptide) by hydrolysis of a carboxyamide bond of beta-aminoalanine, but also shows general aminopeptidase activity. The specificity varies somewhat with source, but amino acid arylamides of Met, Leu and Ala are preferred.. This is Aminopeptidase C (pepC) from Streptococcus thermophilus.